The chain runs to 188 residues: FMN-dependent NADPH-azoreductase (188 aa).

Belongs to the azoreductase type 2 family. Homotetramer. FMN is required as a cofactor.

Its function is as follows. Catalyzes the reductive cleavage of azo bond in aromatic azo compounds to the corresponding amines. Requires NADPH, but not NADH, as an electron donor for its activity. The chain is FMN-dependent NADPH-azoreductase (azo1) from Staphylococcus epidermidis (strain ATCC 12228 / FDA PCI 1200).